The following is a 326-amino-acid chain: MAEGKGRVCVTGGTGFLGSWIIKSLLENGYSVNTTIRADPERKRDVSFLTNLPGASEKLHFFNADLSNPDSFAAAIEGCVGIFHTASPIDFAVSEPEEIVTKRTVDGALGILKACVNSKTVKRFIYTSSGSAVSFNGKDKDVLDESDWSDVDLLRSVKPFGWNYAVSKTLAEKAVLEFGEQNGIDVVTLILPFIVGRFVCPKLPDSIEKALVLVLGKKEQIGVTRFHMVHVDDVARAHIYLLENSVPGGRYNCSPFIVPIEEMSQLLSAKYPEYQILTVDELKEIKGARLPDLNTKKLVDAGFDFKYTIEDMFDDAIQCCKEKGYL.

NADP(+)-binding positions include 12–18 (GGTGFLG), Arg37, and Tyr164.

It belongs to the NAD(P)-dependent epimerase/dehydratase family. Dihydroflavonol-4-reductase subfamily. In terms of assembly, monomer. Detected in roots, and at lower levels in root nodules. Not detected in petioles, leaf and stem.

It catalyses the reaction a (3R,4R)-4,2'-dihydroxyisoflavan + NADP(+) = a (3R)-2'-hydroxyisoflavanone + NADPH + H(+). With respect to regulation, inhibited by vestitone concentrations above 50 uM. In terms of biological role, stereospecific enzyme that catalyzes the NADPH-dependent reduction of (3R)-vestitone to (3R,4R)-4'-methoxyisoflavan-2',4,7-triol (DMI). Has no activity with (3S)-vestitone. Catalyzes the penultimate step in the biosynthesis of the phytoalexin medicarpin, and thereby contributes to plant defense reactions. This chain is Vestitone reductase, found in Medicago sativa (Alfalfa).